A 430-amino-acid chain; its full sequence is Adenylosuccinate synthetase (430 aa).

Residues 17 to 23 (GDEGKGK) and 45 to 47 (GHT) contribute to the GTP site. Residue Asp-18 is the Proton acceptor of the active site. Asp-18 and Gly-45 together coordinate Mg(2+). IMP is bound by residues 18-21 (DEGK), 43-46 (NAGH), Thr-139, Arg-153, Asn-229, Thr-244, and Arg-308. Catalysis depends on His-46, which acts as the Proton donor. 304–310 (TVTGRRR) is a binding site for substrate. Residues Arg-310, 336 to 338 (KLD), and 418 to 420 (GVG) each bind GTP.

The protein belongs to the adenylosuccinate synthetase family. Homodimer. The cofactor is Mg(2+).

The protein localises to the cytoplasm. It catalyses the reaction IMP + L-aspartate + GTP = N(6)-(1,2-dicarboxyethyl)-AMP + GDP + phosphate + 2 H(+). Its pathway is purine metabolism; AMP biosynthesis via de novo pathway; AMP from IMP: step 1/2. In terms of biological role, plays an important role in the de novo pathway and in the salvage pathway of purine nucleotide biosynthesis. Catalyzes the first committed step in the biosynthesis of AMP from IMP. The chain is Adenylosuccinate synthetase from Cryptococcus neoformans var. neoformans serotype D (strain JEC21 / ATCC MYA-565) (Filobasidiella neoformans).